Reading from the N-terminus, the 1368-residue chain is DNA-directed RNA polymerase subunit beta (1368 aa).

Belongs to the RNA polymerase beta chain family. The RNAP catalytic core consists of 2 alpha, 1 beta, 1 beta' and 1 omega subunit. When a sigma factor is associated with the core the holoenzyme is formed, which can initiate transcription.

It carries out the reaction RNA(n) + a ribonucleoside 5'-triphosphate = RNA(n+1) + diphosphate. In terms of biological role, DNA-dependent RNA polymerase catalyzes the transcription of DNA into RNA using the four ribonucleoside triphosphates as substrates. This Burkholderia lata (strain ATCC 17760 / DSM 23089 / LMG 22485 / NCIMB 9086 / R18194 / 383) protein is DNA-directed RNA polymerase subunit beta.